The sequence spans 284 residues: Phosphatidylserine decarboxylase proenzyme (284 aa).

Active-site charge relay system; for autoendoproteolytic cleavage activity residues include Asp-88, His-145, and Ser-248. Catalysis depends on Ser-248, which acts as the Schiff-base intermediate with substrate; via pyruvic acid; for decarboxylase activity. A Pyruvic acid (Ser); by autocatalysis modification is found at Ser-248.

This sequence belongs to the phosphatidylserine decarboxylase family. PSD-B subfamily. Prokaryotic type I sub-subfamily. Heterodimer of a large membrane-associated beta subunit and a small pyruvoyl-containing alpha subunit. The cofactor is pyruvate. Post-translationally, is synthesized initially as an inactive proenzyme. Formation of the active enzyme involves a self-maturation process in which the active site pyruvoyl group is generated from an internal serine residue via an autocatalytic post-translational modification. Two non-identical subunits are generated from the proenzyme in this reaction, and the pyruvate is formed at the N-terminus of the alpha chain, which is derived from the carboxyl end of the proenzyme. The autoendoproteolytic cleavage occurs by a canonical serine protease mechanism, in which the side chain hydroxyl group of the serine supplies its oxygen atom to form the C-terminus of the beta chain, while the remainder of the serine residue undergoes an oxidative deamination to produce ammonia and the pyruvoyl prosthetic group on the alpha chain. During this reaction, the Ser that is part of the protease active site of the proenzyme becomes the pyruvoyl prosthetic group, which constitutes an essential element of the active site of the mature decarboxylase.

It localises to the cell membrane. The catalysed reaction is a 1,2-diacyl-sn-glycero-3-phospho-L-serine + H(+) = a 1,2-diacyl-sn-glycero-3-phosphoethanolamine + CO2. It participates in phospholipid metabolism; phosphatidylethanolamine biosynthesis; phosphatidylethanolamine from CDP-diacylglycerol: step 2/2. Its function is as follows. Catalyzes the formation of phosphatidylethanolamine (PtdEtn) from phosphatidylserine (PtdSer). This Albidiferax ferrireducens (strain ATCC BAA-621 / DSM 15236 / T118) (Rhodoferax ferrireducens) protein is Phosphatidylserine decarboxylase proenzyme.